The chain runs to 233 residues: Orotidine 5'-phosphate decarboxylase (233 aa).

Residues aspartate 9, lysine 31, 58 to 67 (DLKLHDIPNT), threonine 120, arginine 182, glutamine 191, glycine 211, and arginine 212 contribute to the substrate site. Lysine 60 (proton donor) is an active-site residue.

This sequence belongs to the OMP decarboxylase family. Type 1 subfamily. In terms of assembly, homodimer.

The enzyme catalyses orotidine 5'-phosphate + H(+) = UMP + CO2. It participates in pyrimidine metabolism; UMP biosynthesis via de novo pathway; UMP from orotate: step 2/2. Catalyzes the decarboxylation of orotidine 5'-monophosphate (OMP) to uridine 5'-monophosphate (UMP). In Listeria welshimeri serovar 6b (strain ATCC 35897 / DSM 20650 / CCUG 15529 / CIP 8149 / NCTC 11857 / SLCC 5334 / V8), this protein is Orotidine 5'-phosphate decarboxylase.